Reading from the N-terminus, the 178-residue chain is Translation initiation factor IF-3 (178 aa).

The interval 1-20 (MRRPFRATPVQKDGPRSNRD) is disordered.

The protein belongs to the IF-3 family. Monomer.

It localises to the cytoplasm. IF-3 binds to the 30S ribosomal subunit and shifts the equilibrium between 70S ribosomes and their 50S and 30S subunits in favor of the free subunits, thus enhancing the availability of 30S subunits on which protein synthesis initiation begins. In Brucella anthropi (strain ATCC 49188 / DSM 6882 / CCUG 24695 / JCM 21032 / LMG 3331 / NBRC 15819 / NCTC 12168 / Alc 37) (Ochrobactrum anthropi), this protein is Translation initiation factor IF-3.